Reading from the N-terminus, the 116-residue chain is Non-specific lipid-transfer protein (116 aa).

A signal peptide spans 1-23 (MASMKVVCVALIMCIVIAPMAES). Intrachain disulfides connect cysteine 27-cysteine 74, cysteine 37-cysteine 51, cysteine 52-cysteine 97, and cysteine 72-cysteine 111.

This sequence belongs to the plant LTP family.

Its function is as follows. Plant non-specific lipid-transfer proteins transfer phospholipids as well as galactolipids across membranes. May play a role in wax or cutin deposition in the cell walls of expanding epidermal cells and certain secretory tissues. This chain is Non-specific lipid-transfer protein, found in Cicer arietinum (Chickpea).